A 464-amino-acid polypeptide reads, in one-letter code: Cerebellar degeneration-related protein 2-like (464 aa).

Coiled-coil stretches lie at residues 31–154 (AAEL…RRKT), 201–264 (VSSL…KSRV), and 342–379 (MSIL…AEVQ). A disordered region spans residues 371–419 (ESLRHAEVQTSRPVSRDPSMKECRVAEPQQPPPTPPQTPSTPEALEGIS). Residues 384 to 395 (VSRDPSMKECRV) show a composition bias toward basic and acidic residues. Residues 399 to 409 (QQPPPTPPQTP) are compositionally biased toward pro residues.

The protein belongs to the CDR2 family.

This Danio rerio (Zebrafish) protein is Cerebellar degeneration-related protein 2-like (cdr2l).